Reading from the N-terminus, the 321-residue chain is Sideroflexin-3 (321 aa).

Position 1 is an N-acetylmethionine (Met1). The next 4 helical transmembrane spans lie at 146–164, 174–194, 226–246, and 266–286; these read LGMA…ALGL, LVGR…NIPL, FQVV…PPVI, and LQMG…CALF.

Belongs to the sideroflexin family.

Its subcellular location is the mitochondrion membrane. It carries out the reaction L-serine(in) = L-serine(out). In terms of biological role, mitochondrial serine transporter that mediates transport of serine into mitochondria, an important step of the one-carbon metabolism pathway. Mitochondrial serine is converted to glycine and formate, which then exits to the cytosol where it is used to generate the charged folates that serve as one-carbon donors. The protein is Sideroflexin-3 (SFXN3) of Bos taurus (Bovine).